The following is a 362-amino-acid chain: MAADMPDPTLQNVVDQKELKWIFVGGKGGVGKTTTSSSLAVALAESGTRNRVLIISTDPAHNLSDAFRQKFTKTPTLVNGFTNLFAMEVDPQPDIGEMEQLEWAQDSFLTELAGSIPGIDEAMSFAEVMKQVQTMDYDTIVFDTAPTGHTLRLLNFPTILEKGLSKLVALKGAMGGMMGQVTRMLGGMAGGGEGAADLPDQLLGKVEGMLDVVRKVSAQFKDPLLTTFVAVCIPEFLSLYETERLVQELAKFEIDCRNIVINQIIFPESVGGSRLLDARVRMQQKYLDQFYELYEDFHILQLPLLEEEVRGPEALKAFAVNLLKPYVPAPPTDAAARQAALVSEVAALKKRVAELEAALAKK.

27-34 (KGGVGKTT) contacts ATP. Residue Asp-58 is part of the active site. ATP is bound by residues Glu-235 and Asn-262.

Belongs to the arsA ATPase family. As to quaternary structure, homodimer. Interacts with SEC61B.

It is found in the cytoplasm. Its subcellular location is the cytosol. The protein resides in the endoplasmic reticulum. Functionally, ATPase required for the post-translational delivery of tail-anchored (TA) proteins to the endoplasmic reticulum. Recognizes and selectively binds the transmembrane domain of TA proteins in the cytosol. This complex then targets to the endoplasmic reticulum by membrane-bound receptors, where the tail-anchored protein is released for insertion. This process is regulated by ATP binding and hydrolysis. ATP binding drives the homodimer towards the closed dimer state, facilitating recognition of newly synthesized TA membrane proteins. ATP hydrolysis is required for insertion. Subsequently, the homodimer reverts towards the open dimer state, lowering its affinity for the membrane-bound receptor, and returning it to the cytosol to initiate a new round of targeting. This is ATPase ARSA2 from Chlamydomonas reinhardtii (Chlamydomonas smithii).